The following is a 201-amino-acid chain: Natural cytotoxicity triggering receptor 3 (201 aa).

The signal sequence occupies residues 1–18; sequence MAWMLLLILIMVHPGSCA. Residues 19 to 126 form the Ig-like domain; it reads LWVSQPPEIR…VGTGNGTRLV (108 aa). The Extracellular segment spans residues 19–135; sequence LWVSQPPEIR…VVEKEHPQLG (117 aa). Cysteines 39 and 108 form a disulfide. 2 N-linked (GlcNAc...) asparagine glycosylation sites follow: N42 and N121. Residues 136 to 156 traverse the membrane as a helical segment; sequence AGTVLLLRAGFYAVSFLSVAV. Over 157 to 201 the chain is Cytoplasmic; sequence GSTVYYQGKCLTWKGPRRQLPAVVPAPLPPPCGSSAHLLPPVPGG.

Belongs to the natural cytotoxicity receptor (NCR) family. Homodimer in the unliganted form. Interacts with CD3Z. Interacts with and is activated by binding to NCR3LG1. Interacts with and is activated by binding to BAG6. Interacts with and is inhibited by binding to LGALS3. As to expression, selectively expressed by all resting and activated NK cells and weakly expressed in spleen.

The protein resides in the cell membrane. Functionally, cell membrane receptor of natural killer/NK cells that is activated by binding of extracellular ligands including BAG6 and NCR3LG1. Stimulates NK cells cytotoxicity toward neighboring cells producing these ligands. It controls, for instance, NK cells cytotoxicity against tumor cells. Engagement of NCR3 by BAG6 also promotes myeloid dendritic cells (DC) maturation, both through killing DCs that did not acquire a mature phenotype, and inducing the release by NK cells of TNFA and IFNG which promote DC maturation. The chain is Natural cytotoxicity triggering receptor 3 from Homo sapiens (Human).